Here is a 1346-residue protein sequence, read N- to C-terminus: G-protein coupled receptor-associated sorting protein 1 (1346 aa).

3 disordered regions span residues 1–101, 144–177, and 192–258; these read MTGA…FRGE, TESI…RPRP, and ADKS…SAKT. The span at 21–36 shows a compositional bias: low complexity; the sequence is ENANAAEVEPEVPLVV. Basic residues predominate over residues 211-226; that stretch reads FRPRKSMKSNTRFRHM. A Phosphoserine modification is found at S295. Disordered stretches follow at residues 311 to 399 and 461 to 485; these read EEAK…RPEE and VSSF…SKSM. Residues 316–333 are compositionally biased toward basic residues; that stretch reads RSKPRARKGVNMRARHQA. Basic and acidic residues-rich tracts occupy residues 347–361 and 370–399; these read DKNK…EEKA and KKEP…RPEE. Residues 461 to 484 show a composition bias toward polar residues; it reads VSSFCLGSGKKTSMESGPKATSKS. 2 positions are modified to phosphoserine: S619 and S626. T860 carries the post-translational modification Phosphothreonine. A Phosphoserine modification is found at S862. Residues 984 to 1004 are disordered; the sequence is ACEPESSTEHEPDPSRRPQSW. Residues 990–1003 are compositionally biased toward basic and acidic residues; sequence STEHEPDPSRRPQS.

The protein belongs to the GPRASP family. As to quaternary structure, interacts with cytoplasmic tails of a variety of G-protein coupled receptors such as delta opioid receptor/OPRD1, beta-2 adrenergic receptor/ADRB2 and D4 dopamine receptor/DRD4. Interacts with BECN2; the interaction is direct and with D2 dopamine receptor/DRD2. Interacts with PER1. Expressed in the brain.

Its subcellular location is the cytoplasm. Functionally, modulates lysosomal sorting and functional down-regulation of a variety of G-protein coupled receptors. Targets receptors for degradation in lysosomes via its interaction with BECN2. The chain is G-protein coupled receptor-associated sorting protein 1 (Gprasp1) from Rattus norvegicus (Rat).